Here is a 327-residue protein sequence, read N- to C-terminus: Aspartate--ammonia ligase (327 aa).

It belongs to the class-II aminoacyl-tRNA synthetase family. AsnA subfamily.

Its subcellular location is the cytoplasm. The catalysed reaction is L-aspartate + NH4(+) + ATP = L-asparagine + AMP + diphosphate + H(+). It functions in the pathway amino-acid biosynthesis; L-asparagine biosynthesis; L-asparagine from L-aspartate (ammonia route): step 1/1. The protein is Aspartate--ammonia ligase of Fusobacterium nucleatum subsp. nucleatum (strain ATCC 25586 / DSM 15643 / BCRC 10681 / CIP 101130 / JCM 8532 / KCTC 2640 / LMG 13131 / VPI 4355).